A 919-amino-acid polypeptide reads, in one-letter code: Lipoxygenase 3, chloroplastic (919 aa).

The transit peptide at 1–52 (MALAKELMGYPLITERSSLVSSASHFKKRTQSTQFSINPFDRRPRKTKSGVV) directs the protein to the chloroplast. The PLAT domain maps to 86–222 (VRAVVTVRNK…DHPDKRIFFT (137 aa)). The Lipoxygenase domain maps to 225-919 (PYLPNETPSG…CRGVPNSVSI (695 aa)). A disordered region spans residues 272–310 (PDKSSELSRPKLGGKEVPYPRRCRTGRQSTVSDKDAESR). Fe cation is bound by residues His-578, His-583, His-770, Asn-774, and Ile-919.

It belongs to the lipoxygenase family. Fe cation is required as a cofactor. Expressed in roots and leaves.

The protein localises to the plastid. It is found in the chloroplast. It carries out the reaction (9Z,12Z)-octadecadienoate + O2 = (13S)-hydroperoxy-(9Z,11E)-octadecadienoate. The catalysed reaction is (9Z,12Z,15Z)-octadecatrienoate + O2 = (13S)-hydroperoxy-(9Z,11E,15Z)-octadecatrienoate. Its pathway is lipid metabolism; oxylipin biosynthesis. Functionally, 13S-lipoxygenase that can use linolenic acid as substrates. Plant lipoxygenases may be involved in a number of diverse aspects of plant physiology including growth and development, pest resistance, and senescence or responses to wounding. Catalyzes the hydroperoxidation of lipids containing a cis,cis-1,4-pentadiene structure. The sequence is that of Lipoxygenase 3, chloroplastic (LOX3) from Arabidopsis thaliana (Mouse-ear cress).